Here is an 85-residue protein sequence, read N- to C-terminus: Conotoxin Mi15a (85 aa).

The signal sequence occupies residues 1 to 23; that stretch reads MEKLTVLILVATVLLTIQVLGQS. A propeptide spanning residues 24 to 49 is cleaved from the precursor; it reads DRDKHLKRRPKQYATKRLSARMRGHR. Q50 bears the Pyrrolidone carboxylic acid mark.

Belongs to the conotoxin O2 superfamily. Contains 4 disulfide bonds. Expressed by the venom duct.

The protein resides in the secreted. The protein is Conotoxin Mi15a of Conus miles (Soldier cone).